The primary structure comprises 439 residues: UDP-N-acetylmuramoylalanine--D-glutamate ligase (439 aa).

ATP is bound at residue G112 to T118.

Belongs to the MurCDEF family.

It localises to the cytoplasm. It catalyses the reaction UDP-N-acetyl-alpha-D-muramoyl-L-alanine + D-glutamate + ATP = UDP-N-acetyl-alpha-D-muramoyl-L-alanyl-D-glutamate + ADP + phosphate + H(+). The protein operates within cell wall biogenesis; peptidoglycan biosynthesis. In terms of biological role, cell wall formation. Catalyzes the addition of glutamate to the nucleotide precursor UDP-N-acetylmuramoyl-L-alanine (UMA). The protein is UDP-N-acetylmuramoylalanine--D-glutamate ligase of Mannheimia succiniciproducens (strain KCTC 0769BP / MBEL55E).